We begin with the raw amino-acid sequence, 126 residues long: Holo-[acyl-carrier-protein] synthase (126 aa).

Positions 8 and 50 each coordinate Mg(2+).

This sequence belongs to the P-Pant transferase superfamily. AcpS family. The cofactor is Mg(2+).

It localises to the cytoplasm. The enzyme catalyses apo-[ACP] + CoA = holo-[ACP] + adenosine 3',5'-bisphosphate + H(+). Transfers the 4'-phosphopantetheine moiety from coenzyme A to a Ser of acyl-carrier-protein. In Micrococcus luteus (strain ATCC 4698 / DSM 20030 / JCM 1464 / CCM 169 / CCUG 5858 / IAM 1056 / NBRC 3333 / NCIMB 9278 / NCTC 2665 / VKM Ac-2230) (Micrococcus lysodeikticus), this protein is Holo-[acyl-carrier-protein] synthase.